Consider the following 292-residue polypeptide: Recombination-promoting nuclease RpnA (292 aa).

Belongs to the Rpn/YhgA-like nuclease family. It depends on Mg(2+) as a cofactor.

Inhibited by EDTA, Zn(2+) and by Mg(2+) plus Mn(2+); stimulated by Ca(2+) in the presence of Mg(2+). In terms of biological role, a low activity DNA endonuclease yielding 3'-hydroxyl ends, equally active on ss or dsDNA, not active on dsRNA. Shows no sequence specificity. Upon expression enhances RecA-independent DNA recombination 49-fold, concomitantly reducing viability by 88% and probably inducing DNA damage as measured by induction of the SOS repair response in RecA cells. RecA-independent DNA recombination leads to replacement of recipient genes with large segments of donor DNA rather than DNA addition to the donor strain; increased expression of RpnA leads to smaller replacement segments, suggesting this protein may play a role in generating crossover events. In Escherichia coli (strain K12), this protein is Recombination-promoting nuclease RpnA.